The sequence spans 644 residues: Threonine--tRNA ligase (644 aa).

The 61-residue stretch at 1–61 (MVAITLPDGS…VADAKVEIVT (61 aa)) folds into the TGS domain. The segment at 242–533 (DHRKIGKALN…LIENYAGWMP (292 aa)) is catalytic. The Zn(2+) site is built by cysteine 333, histidine 384, and histidine 510.

This sequence belongs to the class-II aminoacyl-tRNA synthetase family. As to quaternary structure, homodimer. Zn(2+) serves as cofactor.

The protein resides in the cytoplasm. The catalysed reaction is tRNA(Thr) + L-threonine + ATP = L-threonyl-tRNA(Thr) + AMP + diphosphate + H(+). Its function is as follows. Catalyzes the attachment of threonine to tRNA(Thr) in a two-step reaction: L-threonine is first activated by ATP to form Thr-AMP and then transferred to the acceptor end of tRNA(Thr). Also edits incorrectly charged L-seryl-tRNA(Thr). This Psychrobacter arcticus (strain DSM 17307 / VKM B-2377 / 273-4) protein is Threonine--tRNA ligase.